The sequence spans 339 residues: MRVLGVESSCDETGLAIYDSAQGLMAHALHSQVATHAEYGGVVPELASRDHVRRVVPLTRRVLAEAGCRLRDIDAVAYTRGPGLVGALMVGAGMARSLAWGLGVPALGVHHMEAHLLAPMLEPNPPAFPFVALLVSGGHTLLVQVAGVGRYRVLGETLDDAAGEAFDKTAKLLGLPYPGGPELEKLAESGDPGRYRFPRPMTDRPGLDFSFSGLKTRVLQTVQQSREADRADIAAAFQSAVVDTLVIKCRRALRATGSQRLVISGGVGANGLLREQMRAMADQAGASLHYPRLALCTDNGAMVAYTGWCRLSEGQHDDLDFSVTARWPLADLTPPGQPV.

The Fe cation site is built by histidine 111 and histidine 115. Substrate is bound by residues 134-138, aspartate 167, glycine 180, and asparagine 270; that span reads LVSGG. Position 298 (aspartate 298) interacts with Fe cation.

Belongs to the KAE1 / TsaD family. Fe(2+) is required as a cofactor.

It localises to the cytoplasm. The enzyme catalyses L-threonylcarbamoyladenylate + adenosine(37) in tRNA = N(6)-L-threonylcarbamoyladenosine(37) in tRNA + AMP + H(+). Functionally, required for the formation of a threonylcarbamoyl group on adenosine at position 37 (t(6)A37) in tRNAs that read codons beginning with adenine. Is involved in the transfer of the threonylcarbamoyl moiety of threonylcarbamoyl-AMP (TC-AMP) to the N6 group of A37, together with TsaE and TsaB. TsaD likely plays a direct catalytic role in this reaction. The sequence is that of tRNA N6-adenosine threonylcarbamoyltransferase from Alkalilimnicola ehrlichii (strain ATCC BAA-1101 / DSM 17681 / MLHE-1).